A 196-amino-acid chain; its full sequence is Large ribosomal subunit protein bL9 (196 aa).

The protein belongs to the bacterial ribosomal protein bL9 family.

Its function is as follows. Binds to the 23S rRNA. The polypeptide is Large ribosomal subunit protein bL9 (Rhodopseudomonas palustris (strain HaA2)).